The following is a 369-amino-acid chain: Anhydro-N-acetylmuramic acid kinase (369 aa).

ATP is bound at residue 12 to 19 (GTSLDGVD).

The protein belongs to the anhydro-N-acetylmuramic acid kinase family.

The enzyme catalyses 1,6-anhydro-N-acetyl-beta-muramate + ATP + H2O = N-acetyl-D-muramate 6-phosphate + ADP + H(+). The protein operates within amino-sugar metabolism; 1,6-anhydro-N-acetylmuramate degradation. It participates in cell wall biogenesis; peptidoglycan recycling. Its function is as follows. Catalyzes the specific phosphorylation of 1,6-anhydro-N-acetylmuramic acid (anhMurNAc) with the simultaneous cleavage of the 1,6-anhydro ring, generating MurNAc-6-P. Is required for the utilization of anhMurNAc either imported from the medium or derived from its own cell wall murein, and thus plays a role in cell wall recycling. The chain is Anhydro-N-acetylmuramic acid kinase from Escherichia coli O8 (strain IAI1).